Consider the following 207-residue polypeptide: Small ribosomal subunit protein uS4c (207 aa).

One can recognise an S4 RNA-binding domain in the interval M92–K153.

Belongs to the universal ribosomal protein uS4 family. As to quaternary structure, part of the 30S ribosomal subunit. Contacts protein S5. The interaction surface between S4 and S5 is involved in control of translational fidelity.

The protein resides in the plastid. It localises to the chloroplast. Functionally, one of the primary rRNA binding proteins, it binds directly to 16S rRNA where it nucleates assembly of the body of the 30S subunit. In terms of biological role, with S5 and S12 plays an important role in translational accuracy. The sequence is that of Small ribosomal subunit protein uS4c (rps4) from Equisetum hyemale (Dutch rush).